Reading from the N-terminus, the 65-residue chain is Ferredoxin-like protein in vnf region (65 aa).

2 4Fe-4S ferredoxin-type domains span residues 2-29 (AMAI…VLQG) and 30-65 (GIYV…PLDD). C10, C13, C16, C20, C39, C42, C50, and C54 together coordinate [4Fe-4S] cluster.

Requires [4Fe-4S] cluster as cofactor.

This chain is Ferredoxin-like protein in vnf region, found in Azotobacter chroococcum mcd 1.